Consider the following 119-residue polypeptide: Thrombin-like enzyme TLBan (119 aa).

The Peptidase S1 domain maps to 1–112; sequence VIGGDECNIN…YLLWIQSIIA (112 aa). Active-site charge relay system residues include histidine 40 and aspartate 59. A disulfide bridge links cysteine 54 with cysteine 118.

Monomer. Post-translationally, contains both N-linked carbohydrates and sialic acid. Expressed by the venom gland.

The protein localises to the secreted. Its activity is regulated as follows. Strongly inhibited by PMSF and slightly inhibited by EDTA and soybean trypsin inhibitor. Its function is as follows. Thrombin-like snake venom serine protease, with high clotting activity in vitro. Also has fibrinogenolytic ability, showing a fast degradation of fibrinogen Aalpha chain (FGA), a slow degradation of Bbeta chain (FGB) and no degradation of gamma chain. Also causes platelet aggregation in platelet rich plasma (PRP) and washed platelet suspension. The polypeptide is Thrombin-like enzyme TLBan (Bothrocophias andianus (Andean lancehead)).